Consider the following 358-residue polypeptide: scyllo-inositol 2-dehydrogenase (NADP(+)) IolW (358 aa).

Belongs to the Gfo/Idh/MocA family.

It catalyses the reaction scyllo-inositol + NADP(+) = scyllo-inosose + NADPH + H(+). Functionally, catalyzes the reversible NADPH-dependent reduction of scyllo-inosose (SIS) to scyllo-inositol (SI). Cannot use NADH instead of NADPH. May be involved in reduction of not only SIS but also various oxidized compounds manifested upon stressful conditions. This is scyllo-inositol 2-dehydrogenase (NADP(+)) IolW from Bacillus subtilis (strain 168).